We begin with the raw amino-acid sequence, 1102 residues long: WASH complex subunit 4 (1102 aa).

Belongs to the SWIP family. In terms of assembly, component of the WASH complex.

Its subcellular location is the early endosome. In terms of biological role, acts at least in part as component of the WASH complex which may regulate wash nucleation-promoting factor (NPF) activity and is required for its membrane targeting during endosomal sorting. During embryogenesis, not involved in the wash-dependent developmental migration of hemocytes anteriorly from the tail. The chain is WASH complex subunit 4 from Drosophila melanogaster (Fruit fly).